The chain runs to 138 residues: Large ribosomal subunit protein uL16c (138 aa).

The protein belongs to the universal ribosomal protein uL16 family. As to quaternary structure, part of the 50S ribosomal subunit.

Its subcellular location is the plastid. It localises to the chloroplast. This is Large ribosomal subunit protein uL16c from Phaeodactylum tricornutum (strain CCAP 1055/1).